A 115-amino-acid chain; its full sequence is MRLYINEIKIKDDILYCYTEDSIKGLSEVGQMLVDSDNYAFAYTLDDGKAYAYLIFVQETWTMLHENMTKKIIINDELELTEFHQELTYILDNIKGNNNYGKEFVATVEETFDIE.

This sequence belongs to the UPF0738 family.

This is UPF0738 protein SACOL1009 from Staphylococcus aureus (strain COL).